Reading from the N-terminus, the 176-residue chain is uncharacterized protein (176 aa).

The N-terminal stretch at 1 to 22 (MKYNNIIFLGLCLGLTTYSALS) is a signal peptide. Cys-38 and Cys-78 are oxidised to a cystine.

The protein belongs to the fimbrial protein family.

The protein localises to the fimbrium. This is an uncharacterized protein from Escherichia coli (strain K12).